The primary structure comprises 178 residues: Caveolin-1 (178 aa).

The residue at position 2 (Ser2) is an N-acetylserine. Ser2 carries the phosphoserine modification. The tract at residues 2-94 (SGGKYVDSEG…WKASFTTFTV (93 aa)) is required for homooligomerization. Residues 2-104 (SGGKYVDSEG…TKYWFYRLLS (103 aa)) are Cytoplasmic-facing. At Lys5 the chain carries N6-acetyllysine; alternate. Lys5 is covalently cross-linked (Glycyl lysine isopeptide (Lys-Gly) (interchain with G-Cter in ubiquitin); alternate). Tyr6 bears the Phosphotyrosine mark. At Ser9 the chain carries Phosphoserine. Tyr14 is modified (phosphotyrosine; by ABL1). Tyr25 is modified (phosphotyrosine). Glycyl lysine isopeptide (Lys-Gly) (interchain with G-Cter in ubiquitin) cross-links involve residues Lys26, Lys30, Lys39, Lys47, and Lys57. Residues 82 to 94 (DGIWKASFTTFTV) form an interaction with CAVIN3 region. Positions 105-125 (SLVGIPVALIWGIYFAILSFL) form an intramembrane region, helical. At 126–178 (YIWAVVPCIKSFLIKIQCISRIYSICIHTFCDPLYEAIGKIFSNIRISMQKEI) the chain is on the cytoplasmic side. The interacts with SPRY1, SPRY2, SPRY3 and SPRY4 stretch occupies residues 131 to 142 (VPCIKSFLIKIQ). 3 S-palmitoyl cysteine lipidation sites follow: Cys133, Cys143, and Cys156. Positions 149–160 (SICIHTFCDPLY) are interacts with SPRY1, SPRY2, and SPRY4. The interacts with SPRY1, SPRY2, SPRY3 and SPRY4 stretch occupies residues 167 to 178 (FSNIRISMQKEI).

This sequence belongs to the caveolin family. Homooligomer. Interacts with GLIPR2. Interacts with NOSTRIN. Interacts with SNAP25 and STX1A. Interacts (via the N-terminus) with DPP4; the interaction is direct. Interacts with CTNNB1, CDH1 and JUP. Interacts with PACSIN2; this interaction induces membrane tubulation. Interacts with SLC7A9. Interacts with BMX and BTK. Interacts with TGFBR1. Interacts with CAVIN3 (via leucine-zipper domain) in a cholesterol-sensitive manner. Interacts with CAVIN1. Interacts with EHD2 in a cholesterol-dependent manner. Forms a ternary complex with UBXN6 and VCP; mediates CAV1 targeting to lysosomes for degradation. Interacts with ABCG1; this interaction regulates ABCG1-mediated cholesterol efflux. Interacts with NEU3; this interaction enhances NEU3 sialidase activity within caveola. Interacts (via C-terminus) with SPRY1, SPRY2 (via C-terminus), SPRY3, and SPRY4. Interacts with IGFBP5; this interaction allows trafficking of IGFBP5 from the plasma membrane to the nucleus. Post-translationally, phosphorylated at Tyr-14 by ABL1 in response to oxidative stress. In terms of processing, ubiquitinated. Undergo monoubiquitination and multi- and/or polyubiquitination. Monoubiquitination of N-terminal lysines promotes integration in a ternary complex with UBXN6 and VCP which promotes oligomeric CAV1 targeting to lysosomes for degradation. Ubiquitinated by ZNRF1; leading to degradation and modulation of the TLR4-mediated immune response.

It is found in the golgi apparatus membrane. It localises to the cell membrane. Its subcellular location is the membrane. The protein resides in the caveola. The protein localises to the membrane raft. Functionally, may act as a scaffolding protein within caveolar membranes. Forms a stable heterooligomeric complex with CAV2 that targets to lipid rafts and drives caveolae formation. Mediates the recruitment of CAVIN proteins (CAVIN1/2/3/4) to the caveolae. Interacts directly with G-protein alpha subunits and can functionally regulate their activity. Involved in the costimulatory signal essential for T-cell receptor (TCR)-mediated T-cell activation. Its binding to DPP4 induces T-cell proliferation and NF-kappa-B activation in a T-cell receptor/CD3-dependent manner. Recruits CTNNB1 to caveolar membranes and may regulate CTNNB1-mediated signaling through the Wnt pathway. Negatively regulates TGFB1-mediated activation of SMAD2/3 by mediating the internalization of TGFBR1 from membrane rafts leading to its subsequent degradation. Binds 20(S)-hydroxycholesterol (20(S)-OHC). In Atelerix albiventris (Middle-African hedgehog), this protein is Caveolin-1 (CAV1).